The chain runs to 221 residues: Cytochrome c biogenesis ATP-binding export protein CcmA (221 aa).

The region spanning 14-221 is the ABC transporter domain; that stretch reads LACHDVSCLR…FDLLDESHFS (208 aa). An ATP-binding site is contributed by 46–53; the sequence is GANGIGKS.

The protein belongs to the ABC transporter superfamily. CcmA exporter (TC 3.A.1.107) family. The complex is composed of two ATP-binding proteins (CcmA) and two transmembrane proteins (CcmB).

The protein localises to the cell inner membrane. It catalyses the reaction heme b(in) + ATP + H2O = heme b(out) + ADP + phosphate + H(+). In terms of biological role, part of the ABC transporter complex CcmAB involved in the biogenesis of c-type cytochromes; once thought to export heme, this seems not to be the case, but its exact role is uncertain. Responsible for energy coupling to the transport system. The chain is Cytochrome c biogenesis ATP-binding export protein CcmA from Zymomonas mobilis subsp. mobilis (strain ATCC 31821 / ZM4 / CP4).